The following is a 674-amino-acid chain: DNA ligase (674 aa).

Residues 36–40, 85–86, and Glu-116 contribute to the NAD(+) site; these read DSVYD and SL. Lys-118 acts as the N6-AMP-lysine intermediate in catalysis. NAD(+) contacts are provided by Arg-139, Glu-176, Lys-292, and Lys-316. Zn(2+)-binding residues include Cys-410, Cys-413, Cys-428, and Cys-433. A BRCT domain is found at 596-674; that stretch reads PSSGNIAGKT…EADLLKFLTN (79 aa).

Belongs to the NAD-dependent DNA ligase family. LigA subfamily. The cofactor is Mg(2+). Mn(2+) is required as a cofactor.

It catalyses the reaction NAD(+) + (deoxyribonucleotide)n-3'-hydroxyl + 5'-phospho-(deoxyribonucleotide)m = (deoxyribonucleotide)n+m + AMP + beta-nicotinamide D-nucleotide.. Its function is as follows. DNA ligase that catalyzes the formation of phosphodiester linkages between 5'-phosphoryl and 3'-hydroxyl groups in double-stranded DNA using NAD as a coenzyme and as the energy source for the reaction. It is essential for DNA replication and repair of damaged DNA. This is DNA ligase from Rippkaea orientalis (strain PCC 8801 / RF-1) (Cyanothece sp. (strain PCC 8801)).